Here is a 115-residue protein sequence, read N- to C-terminus: DNA-binding protein APE_1087b (115 aa).

Belongs to the PDCD5 family.

This Aeropyrum pernix (strain ATCC 700893 / DSM 11879 / JCM 9820 / NBRC 100138 / K1) protein is DNA-binding protein APE_1087b.